The following is a 385-amino-acid chain: Queuine tRNA-ribosyltransferase (385 aa).

Asp92 functions as the Proton acceptor in the catalytic mechanism. Substrate-binding positions include 92–96, Asp146, Gln188, and Gly215; that span reads DSGGF. The interval 246–252 is RNA binding; it reads GVGHPED. Asp265 acts as the Nucleophile in catalysis. Residues 270–274 form an RNA binding; important for wobble base 34 recognition region; it reads TRTGR. Cys303, Cys305, Cys308, and His334 together coordinate Zn(2+).

It belongs to the queuine tRNA-ribosyltransferase family. In terms of assembly, homodimer. Within each dimer, one monomer is responsible for RNA recognition and catalysis, while the other monomer binds to the replacement base PreQ1. Zn(2+) is required as a cofactor.

It catalyses the reaction 7-aminomethyl-7-carbaguanine + guanosine(34) in tRNA = 7-aminomethyl-7-carbaguanosine(34) in tRNA + guanine. It participates in tRNA modification; tRNA-queuosine biosynthesis. Its function is as follows. Catalyzes the base-exchange of a guanine (G) residue with the queuine precursor 7-aminomethyl-7-deazaguanine (PreQ1) at position 34 (anticodon wobble position) in tRNAs with GU(N) anticodons (tRNA-Asp, -Asn, -His and -Tyr). Catalysis occurs through a double-displacement mechanism. The nucleophile active site attacks the C1' of nucleotide 34 to detach the guanine base from the RNA, forming a covalent enzyme-RNA intermediate. The proton acceptor active site deprotonates the incoming PreQ1, allowing a nucleophilic attack on the C1' of the ribose to form the product. After dissociation, two additional enzymatic reactions on the tRNA convert PreQ1 to queuine (Q), resulting in the hypermodified nucleoside queuosine (7-(((4,5-cis-dihydroxy-2-cyclopenten-1-yl)amino)methyl)-7-deazaguanosine). This chain is Queuine tRNA-ribosyltransferase, found in Thermus thermophilus (strain ATCC BAA-163 / DSM 7039 / HB27).